The following is a 190-amino-acid chain: uncharacterized protein (190 aa).

At Met1 to Arg16 the chain is on the cytoplasmic side. Residues Tyr17 to Leu37 form a helical membrane-spanning segment. The Lumenal segment spans residues Lys38–Ala55. The chain crosses the membrane as a helical span at residues Ile56–Leu76. The Cytoplasmic segment spans residues Leu77–Thr98. Residues Val99–Ala119 form a helical membrane-spanning segment. The Lumenal portion of the chain corresponds to Ser120–Arg138. A helical transmembrane segment spans residues Ile139–Leu159. At Arg160–Arg163 the chain is on the cytoplasmic side. Residues Thr164–Val184 traverse the membrane as a helical segment. At Thr185–Val190 the chain is on the lumenal side.

It belongs to the derlin family.

The protein resides in the endoplasmic reticulum membrane. This is an uncharacterized protein from Schizosaccharomyces pombe (strain 972 / ATCC 24843) (Fission yeast).